The chain runs to 599 residues: uncharacterized protein (599 aa).

This is an uncharacterized protein from Acanthamoeba polyphaga (Amoeba).